We begin with the raw amino-acid sequence, 150 residues long: SsrA-binding protein (150 aa).

It belongs to the SmpB family.

The protein localises to the cytoplasm. Functionally, required for rescue of stalled ribosomes mediated by trans-translation. Binds to transfer-messenger RNA (tmRNA), required for stable association of tmRNA with ribosomes. tmRNA and SmpB together mimic tRNA shape, replacing the anticodon stem-loop with SmpB. tmRNA is encoded by the ssrA gene; the 2 termini fold to resemble tRNA(Ala) and it encodes a 'tag peptide', a short internal open reading frame. During trans-translation Ala-aminoacylated tmRNA acts like a tRNA, entering the A-site of stalled ribosomes, displacing the stalled mRNA. The ribosome then switches to translate the ORF on the tmRNA; the nascent peptide is terminated with the 'tag peptide' encoded by the tmRNA and targeted for degradation. The ribosome is freed to recommence translation, which seems to be the essential function of trans-translation. The protein is SsrA-binding protein of Campylobacter jejuni (strain RM1221).